The following is a 1382-amino-acid chain: MKASAVLAPGILVILFTLVQKSNCECKEALVKSKMNVNMKYQLPNFTAETPIQNVVLHNHHIYLGAVNYIYVLSDKTLQKVAEYKTGPVLEHPDCLPCQDCRHKANLSNGIWKDNINMALLVDTYYDDQLISCGSVHRGTCQRHVLPPNNAADIQSEVHCMYTPQPEEEPSQCPDCVVSALGTKVLLSEKNRFINFFVGNTINSSYLPDHSLHSMSVRRLKETQDGFKFLTDQSYIDVLPEFRDSYPIKYIHAFKSNHFIYFLTVQRETLDAQTFHTRIIRFCSGDSGLHSYMEMPLECILTEKRRKRAAREEVFNILQAAYVSKPGAHLARQIGASLNDDILYGVFAQSKPDSAEPMNRSAVCAFPIKYVNEFFNKIVNKNNVRCLQHFYGPNHEHCFNRTLLRNSSSCDVRSDEYRTEFTTALQRVDLFMGQFNQVLLTSISTFIKGDLTIANLGTSEGRFMQVVVSRLGSSTPHVNFRLDSHPVSPEVIVEHPLNGNDYTLVVTGKKITKIPLNGLGCEHFQSCSQCLSAPAFVQCGWCHDKCVQLEECPSGTWTQETCLPTIYKVLPTSAPLEGGTTLTICGWDFGFRRNNKFDLKKTRVFLGNESCTVTLSESSTNMLKCTVGPALYEHFNMSIIISNSRGTVQYSTFSYVDPIITSISPTYGPKTGGTLLTLTGKYLDSGNSRHISIGGKTCTLKSVSNSILECYTPPQTTSTEFPVKLKIDLANRNTYSFSYQEDPIIYKIHPIKSFISGGSTITGVGKNLNSVSVLRMVINVHEAGRNFTVACQHRSNSEIICCTTPSLQQLDLQLPLTTRAFFMLDGIHSRYFDLIYVHNPMFKVFEKPVKISIGIENILEIKGNDIDPEAVKGEVLKVGNKSCENIHSYSETVLCTVPNDLLKLNSELNIEWKQAVTSTVLGKVIVQPDQNITEFIVGILSISGILLTLLGLLLWWKKKKQIKDLGSELVRYDARVHTPHLDRLVSARSVSPTTEMVSNESVDYRATFPEDQFPNSSQNGSCRQVQYPLTDLSPILTSGDSDISSPLLQNTVHIDLSALNPELVQAVQHVVIGPSSLIVHFNEVIGRGHFGCVYHGTLLDNDDKKIHCAVKSLNRITDIGEVSQFLTEGIIMKDFSHPNVLSLLGICLRSEGSPLVVLPYMKHGDLRNFIRNETHNPTVKDLIGFGLQVAKGMKYLASKKFVHRDLAARNCMLDENFTVKVADFGLARDMYDKEYYSVHNKTGAKLPVKWMALESLQTQKFTTKSDVWSFGVLLWELMTRGAPPYPDVNTFDITVYLLQGRRLLQPEYCPDPLYEVMLKCWHPKAELRPSFSELVSRISAIFSTFIGEHYVHVNATYVNIKCVAPYPSLLSSQDNFDSEGNT.

A signal peptide spans Met1–Cys24. The Extracellular segment spans residues Glu25–Thr933. The Sema domain occupies Lys27–Leu516. Asn45 carries an N-linked (GlcNAc...) asparagine glycan. 4 disulfide bridges follow: Cys95–Cys101, Cys98–Cys160, Cys133–Cys141, and Cys173–Cys176. Asn106 carries N-linked (GlcNAc...) asparagine glycosylation. Residues Asn203 and Asn359 are each glycosylated (N-linked (GlcNAc...) asparagine). 2 disulfides stabilise this stretch: Cys299/Cys364 and Cys386/Cys398. Residues Asn400 and Asn406 are each glycosylated (N-linked (GlcNAc...) asparagine). 4 disulfides stabilise this stretch: Cys521/Cys539, Cys527/Cys562, Cys530/Cys546, and Cys542/Cys552. 3 IPT/TIG domains span residues Pro564–Val656, Pro658–Gln740, and Pro743–Val837. A glycan (O-linked (Man) threonine) is linked at Thr583. 2 N-linked (GlcNAc...) asparagine glycosylation sites follow: Asn608 and Asn636. O-linked (Man) threonine glycosylation is found at Thr677 and Thr762. 3 N-linked (GlcNAc...) asparagine glycosylation sites follow: Asn786, Asn880, and Asn931. Residues Glu934–Trp956 traverse the membrane as a helical segment. Over Lys957–Thr1382 the chain is Cytoplasmic. Ser967 bears the Phosphoserine mark. At Thr978 the chain carries Phosphothreonine. Phosphoserine occurs at positions 991, 998, and 1001. Position 1004 is a phosphotyrosine (Tyr1004). Residues Val1079 to Ile1346 form the Protein kinase domain. ATP is bound by residues Ile1085 to Val1093 and Lys1111. The Proton acceptor role is filled by Asp1205. Residues Leu1213–Thr1382 are interaction with RANBP9. Tyr1231 is subject to Phosphotyrosine. Phosphotyrosine; by autocatalysis occurs at positions 1235 and 1236. The residue at position 1290 (Thr1290) is a Phosphothreonine. The tract at residues Trp1321–Ile1360 is interaction with MUC20. Phosphotyrosine; by autocatalysis occurs at positions 1350 and 1357. Tyr1366 is modified (phosphotyrosine).

This sequence belongs to the protein kinase superfamily. Tyr protein kinase family. As to quaternary structure, heterodimer made of an alpha chain (50 kDa) and a beta chain (145 kDa) which are disulfide linked. Binds PLXNB1. Interacts when phosphorylated with downstream effectors including STAT3, PIK3R1, SRC, PCLG1, GRB2 and GAB1. Interacts with SPSB1, SPSB2 and SPSB4. Interacts with INPP5D/SHIP1. When phosphorylated at Tyr-1357, interacts with INPPL1/SHIP2. Interacts with RANBP9 and RANBP10, as well as SPSB1, SPSB2, SPSB3 and SPSB4. SPSB1 binding occurs in the presence and in the absence of HGF, however HGF treatment has a positive effect on this interaction. Interacts with MUC20; prevents interaction with GRB2 and suppresses hepatocyte growth factor-induced cell proliferation. Interacts with GRB10. Interacts with PTPN1 and PTPN2. Interacts with tensin TNS3. Interacts (when phosphorylated) with tensin TNS4 (via SH2 domain); the interaction increases MET protein stability by inhibiting MET endocytosis and subsequent lysosomal degradation. Post-translationally, autophosphorylated in response to ligand binding on Tyr-1235 and Tyr-1236 in the kinase domain leading to further phosphorylation of Tyr-1350 and Tyr-1357 in the C-terminal multifunctional docking site. Dephosphorylated by PTPRJ at Tyr-1350 and Tyr-1366. Dephosphorylated by PTPN1 and PTPN2. Ubiquitinated. Ubiquitination by CBL regulates the receptor stability and activity through proteasomal degradation. In terms of processing, O-mannosylation of IPT/TIG domains by TMEM260 is required for protein maturation. O-mannosylated residues are composed of single mannose glycans that are not elongated or modified.

The protein resides in the membrane. The enzyme catalyses L-tyrosyl-[protein] + ATP = O-phospho-L-tyrosyl-[protein] + ADP + H(+). In its inactive state, the C-terminal tail interacts with the catalytic domain and inhibits the kinase activity. Upon ligand binding, the C-terminal tail is displaced and becomes phosphorylated, thus increasing the kinase activity. Its function is as follows. Receptor tyrosine kinase that transduces signals from the extracellular matrix into the cytoplasm by binding to hepatocyte growth factor/HGF ligand. Regulates many physiological processes including proliferation, scattering, morphogenesis and survival. Ligand binding at the cell surface induces autophosphorylation of MET on its intracellular domain that provides docking sites for downstream signaling molecules. Following activation by ligand, interacts with the PI3-kinase subunit PIK3R1, PLCG1, SRC, GRB2, STAT3 or the adapter GAB1. Recruitment of these downstream effectors by MET leads to the activation of several signaling cascades including the RAS-ERK, PI3 kinase-AKT, or PLCgamma-PKC. The RAS-ERK activation is associated with the morphogenetic effects while PI3K/AKT coordinates prosurvival effects. During embryonic development, MET signaling plays a role in gastrulation, development and migration of muscles and neuronal precursors, angiogenesis and kidney formation. In adults, participates in wound healing as well as organ regeneration and tissue remodeling. Also promotes differentiation and proliferation of hematopoietic cells. In Atelerix albiventris (Middle-African hedgehog), this protein is Hepatocyte growth factor receptor (MET).